Reading from the N-terminus, the 205-residue chain is Holliday junction branch migration complex subunit RuvA (205 aa).

Residues 1–64 (MIGKLRGIVD…DEAIRLIGFT (64 aa)) are domain I. The interval 65 to 143 (TDSEREWFRL…DSMGLSAALE (79 aa)) is domain II. A flexible linker region spans residues 144-152 (VGVNGEAVS). Positions 153-205 (SVSAPARDAVSALVNLGYPQAQAMGAVAAAAKRLDDAASTEQLIRHGLKELAR) are domain III.

The protein belongs to the RuvA family. As to quaternary structure, homotetramer. Forms an RuvA(8)-RuvB(12)-Holliday junction (HJ) complex. HJ DNA is sandwiched between 2 RuvA tetramers; dsDNA enters through RuvA and exits via RuvB. An RuvB hexamer assembles on each DNA strand where it exits the tetramer. Each RuvB hexamer is contacted by two RuvA subunits (via domain III) on 2 adjacent RuvB subunits; this complex drives branch migration. In the full resolvosome a probable DNA-RuvA(4)-RuvB(12)-RuvC(2) complex forms which resolves the HJ.

It localises to the cytoplasm. Functionally, the RuvA-RuvB-RuvC complex processes Holliday junction (HJ) DNA during genetic recombination and DNA repair, while the RuvA-RuvB complex plays an important role in the rescue of blocked DNA replication forks via replication fork reversal (RFR). RuvA specifically binds to HJ cruciform DNA, conferring on it an open structure. The RuvB hexamer acts as an ATP-dependent pump, pulling dsDNA into and through the RuvAB complex. HJ branch migration allows RuvC to scan DNA until it finds its consensus sequence, where it cleaves and resolves the cruciform DNA. This Parvibaculum lavamentivorans (strain DS-1 / DSM 13023 / NCIMB 13966) protein is Holliday junction branch migration complex subunit RuvA.